A 513-amino-acid chain; its full sequence is Beta-glucosidase 5 (513 aa).

Residues 1-26 (MAAAIAVVYLSLLLLLLHGAAPAVLG) form the signal peptide. Gln46 serves as a coordination point for a beta-D-glucoside. Glu192 (proton donor) is an active-site residue. A disulfide bridge links Cys211 with Cys220. Asn224 and Asn273 each carry an N-linked (GlcNAc...) asparagine glycan. The a beta-D-glucoside site is built by Tyr336 and Glu405. Glu405 serves as the catalytic Nucleophile. N-linked (GlcNAc...) asparagine glycosylation is present at Asn412. A beta-D-glucoside-binding positions include Trp447, 454 to 455 (EY), and Tyr463.

This sequence belongs to the glycosyl hydrolase 1 family.

The catalysed reaction is Hydrolysis of terminal, non-reducing beta-D-glucosyl residues with release of beta-D-glucose.. In Oryza sativa subsp. japonica (Rice), this protein is Beta-glucosidase 5 (BGLU5).